We begin with the raw amino-acid sequence, 1033 residues long: Complement receptor type 2 (1033 aa).

The N-terminal stretch at methionine 1–glycine 20 is a signal peptide. Sushi domains lie at isoleucine 21–tyrosine 84, serine 89–serine 148, leucine 152–glutamate 212, alanine 213–glutamate 273, isoleucine 274–leucine 344, valine 349–lysine 408, glutamate 409–valine 468, alanine 469–glutamate 524, isoleucine 525–leucine 595, valine 600–lysine 659, glutamate 660–valine 716, isoleucine 717–arginine 781, threonine 786–lysine 845, isoleucine 849–glutamate 909, and valine 910–serine 970. Over isoleucine 21–arginine 971 the chain is Extracellular. Cystine bridges form between cysteine 23-cysteine 65, cysteine 51-cysteine 82, cysteine 91-cysteine 132, cysteine 118-cysteine 146, cysteine 154-cysteine 197, cysteine 183-cysteine 210, cysteine 215-cysteine 256, cysteine 242-cysteine 271, cysteine 276-cysteine 325, cysteine 305-cysteine 342, cysteine 351-cysteine 393, cysteine 379-cysteine 406, cysteine 410-cysteine 453, cysteine 439-cysteine 466, cysteine 471-cysteine 509, cysteine 495-cysteine 522, cysteine 527-cysteine 576, cysteine 556-cysteine 593, cysteine 602-cysteine 644, cysteine 630-cysteine 657, cysteine 662-cysteine 699, cysteine 685-cysteine 714, cysteine 719-cysteine 762, cysteine 748-cysteine 779, cysteine 788-cysteine 830, cysteine 816-cysteine 843, cysteine 851-cysteine 894, and cysteine 880-cysteine 907. Asparagine 121 and asparagine 127 each carry an N-linked (GlcNAc...) asparagine glycan. N-linked (GlcNAc...) asparagine glycosylation is present at asparagine 294. N-linked (GlcNAc...) asparagine glycosylation is present at asparagine 372. N-linked (GlcNAc...) asparagine glycosylation occurs at asparagine 492. An N-linked (GlcNAc...) asparagine glycan is attached at asparagine 623. Asparagine 682 is a glycosylation site (N-linked (GlcNAc...) asparagine). Residues asparagine 800, asparagine 823, and asparagine 861 are each glycosylated (N-linked (GlcNAc...) asparagine). A glycan (N-linked (GlcNAc...) asparagine) is linked at asparagine 911. Cystine bridges form between cysteine 912/cysteine 955 and cysteine 941/cysteine 968. Residues serine 972–serine 999 form a helical membrane-spanning segment. The Cytoplasmic portion of the chain corresponds to lysine 1000 to serine 1033.

Belongs to the receptors of complement activation (RCA) family. In terms of assembly, interacts (via Sushi domain 1 and 2) with C3. Interacts with CD19. Part of a complex composed of CD19, CR2/CD21, CD81 and IFITM1/CD225 in the membrane of mature B-cells. Interacts (via Sushi domain 1 and 2) with FCER2 (via the C-terminus). Interacts with CD23. Interacts with FCRL5. Interacts with CR1. Interacts with INFNA1. As to quaternary structure, (Microbial infection) Interacts with Epstein-Barr virus gp350 protein. Mature B-lymphocytes, T-lymphocytes, pharyngeal epithelial cells, astrocytes and follicular dendritic cells of the spleen.

The protein resides in the cell membrane. Serves as a receptor for various ligands including complement component CD3d, HNRNPU OR IFNA1. When C3d is bound to antigens, attaches to C3d on B-cell surface and thereby facilitates the recognition and uptake of antigens by B-cells. This interaction enhances B-cell activation and subsequent immune responses. Forms a complex with several partners on the surface of B-cells including CD19, FCRL5 and CD81, to form the B-cell coreceptor complex that plays a crucial role in B-cell activation and signaling. Also induces specific intracellular signaling separately from the BCR and CD19 by activating the tyrosine kinase SRC, which then phosphorylates nucleolin/NCL and triggers AKT and GSK3 kinase activities in a SYK/CD19-independent manner. Acts as a ligand for CD23 (FcepsilonRII), a low-affinity receptor for IgE, which is expressed on B-cells and other immune cells, and thus participates in the regulation of IgE production. Its function is as follows. (Microbial infection) Acts as a receptor for Epstein-Barr virus. This chain is Complement receptor type 2 (CR2), found in Homo sapiens (Human).